We begin with the raw amino-acid sequence, 419 residues long: UDP-N-acetylglucosamine 1-carboxyvinyltransferase (419 aa).

22–23 is a phosphoenolpyruvate binding site; sequence KN. Arginine 91 is a UDP-N-acetyl-alpha-D-glucosamine binding site. The Proton donor role is filled by cysteine 115. A 2-(S-cysteinyl)pyruvic acid O-phosphothioketal modification is found at cysteine 115. Residues 120–124, 160–163, aspartate 305, and valine 327 contribute to the UDP-N-acetyl-alpha-D-glucosamine site; these read RPVDL and KVSV.

The protein belongs to the EPSP synthase family. MurA subfamily.

Its subcellular location is the cytoplasm. The enzyme catalyses phosphoenolpyruvate + UDP-N-acetyl-alpha-D-glucosamine = UDP-N-acetyl-3-O-(1-carboxyvinyl)-alpha-D-glucosamine + phosphate. Its pathway is cell wall biogenesis; peptidoglycan biosynthesis. Functionally, cell wall formation. Adds enolpyruvyl to UDP-N-acetylglucosamine. The chain is UDP-N-acetylglucosamine 1-carboxyvinyltransferase from Salmonella agona (strain SL483).